A 147-amino-acid polypeptide reads, in one-letter code: D-aminoacyl-tRNA deacylase (147 aa).

The Gly-cisPro motif, important for rejection of L-amino acids motif lies at 137-138; that stretch reads GP.

This sequence belongs to the DTD family. As to quaternary structure, homodimer.

It is found in the cytoplasm. The enzyme catalyses glycyl-tRNA(Ala) + H2O = tRNA(Ala) + glycine + H(+). It carries out the reaction a D-aminoacyl-tRNA + H2O = a tRNA + a D-alpha-amino acid + H(+). Functionally, an aminoacyl-tRNA editing enzyme that deacylates mischarged D-aminoacyl-tRNAs. Also deacylates mischarged glycyl-tRNA(Ala), protecting cells against glycine mischarging by AlaRS. Acts via tRNA-based rather than protein-based catalysis; rejects L-amino acids rather than detecting D-amino acids in the active site. By recycling D-aminoacyl-tRNA to D-amino acids and free tRNA molecules, this enzyme counteracts the toxicity associated with the formation of D-aminoacyl-tRNA entities in vivo and helps enforce protein L-homochirality. The polypeptide is D-aminoacyl-tRNA deacylase (Exiguobacterium sp. (strain ATCC BAA-1283 / AT1b)).